Reading from the N-terminus, the 260-residue chain is tRNA pseudouridine synthase A (260 aa).

The active-site Nucleophile is Asp-60. Tyr-118 contributes to the substrate binding site.

The protein belongs to the tRNA pseudouridine synthase TruA family. Homodimer.

It carries out the reaction uridine(38/39/40) in tRNA = pseudouridine(38/39/40) in tRNA. Functionally, formation of pseudouridine at positions 38, 39 and 40 in the anticodon stem and loop of transfer RNAs. The sequence is that of tRNA pseudouridine synthase A from Leuconostoc citreum (strain KM20).